Consider the following 294-residue polypeptide: Release factor glutamine methyltransferase (294 aa).

Residues E148 and N201 each contribute to the S-adenosyl-L-methionine site. N201 to Y204 is a binding site for substrate.

The protein belongs to the protein N5-glutamine methyltransferase family. PrmC subfamily.

It catalyses the reaction L-glutaminyl-[peptide chain release factor] + S-adenosyl-L-methionine = N(5)-methyl-L-glutaminyl-[peptide chain release factor] + S-adenosyl-L-homocysteine + H(+). Methylates the class 1 translation termination release factors RF1/PrfA and RF2/PrfB on the glutamine residue of the universally conserved GGQ motif. The protein is Release factor glutamine methyltransferase of Bifidobacterium longum (strain NCC 2705).